The chain runs to 478 residues: Ribulose bisphosphate carboxylase large chain (478 aa).

Residues 1-2 constitute a propeptide that is removed on maturation; sequence MS. P3 is subject to N-acetylproline. Position 14 is an N6,N6,N6-trimethyllysine (K14). N123 and T173 together coordinate substrate. The Proton acceptor role is filled by K175. Position 177 (K177) interacts with substrate. Residues K201, D203, and E204 each coordinate Mg(2+). At K201 the chain carries N6-carboxylysine. H294 functions as the Proton acceptor in the catalytic mechanism. The substrate site is built by R295, H327, and S379.

This sequence belongs to the RuBisCO large chain family. Type I subfamily. Heterohexadecamer of 8 large chains and 8 small chains; disulfide-linked. The disulfide link is formed within the large subunit homodimers. Requires Mg(2+) as cofactor. Post-translationally, the disulfide bond which can form in the large chain dimeric partners within the hexadecamer appears to be associated with oxidative stress and protein turnover.

It localises to the plastid. The protein resides in the chloroplast. The catalysed reaction is 2 (2R)-3-phosphoglycerate + 2 H(+) = D-ribulose 1,5-bisphosphate + CO2 + H2O. The enzyme catalyses D-ribulose 1,5-bisphosphate + O2 = 2-phosphoglycolate + (2R)-3-phosphoglycerate + 2 H(+). In terms of biological role, ruBisCO catalyzes two reactions: the carboxylation of D-ribulose 1,5-bisphosphate, the primary event in carbon dioxide fixation, as well as the oxidative fragmentation of the pentose substrate in the photorespiration process. Both reactions occur simultaneously and in competition at the same active site. This chain is Ribulose bisphosphate carboxylase large chain, found in Neurachne tenuifolia.